The primary structure comprises 309 residues: Putative G-protein coupled receptor B0244.4 (309 aa).

A run of 6 helical transmembrane segments spans residues 39-59 (SIIFWIDFLIPCTLFVVACFL), 82-102 (YIFMVSRAISALTACVIMLAL), 114-134 (IYFLFFLIDDLSFYSLLGSYV), 162-182 (FAIANLITSVVLAITTAMFQA), 204-224 (IMLVLILTSFLIPIVTLSFVL), and 256-276 (WTLFTFTLITLTEAIPSFYLV).

The protein belongs to the G-protein coupled receptor 1 family. B0244 subfamily.

It is found in the cell membrane. This Caenorhabditis elegans protein is Putative G-protein coupled receptor B0244.4.